The primary structure comprises 360 residues: Protein OSB4, chloroplastic (360 aa).

Residues 1-61 constitute a chloroplast transit peptide; sequence MQFLGRSISK…AEKSSEEWPR (61 aa). The tract at residues 28 to 64 is disordered; sequence SQQFLSTSSTESSSRTRGGGGGNRAEKSSEEWPRPME. Positions 33–43 are enriched in low complexity; it reads STSSTESSSRT. Residues 51–61 are compositionally biased toward basic and acidic residues; it reads RAEKSSEEWPR. Residues 71–188 form the SSB domain; the sequence is IANSIDLIGY…VMVRDLHYIE (118 aa). PDF region regions lie at residues 224–276 and 296–344; these read WFDL…SELK and WKDL…EKLP.

It localises to the plastid. It is found in the chloroplast. Its function is as follows. Binds single-stranded DNA. This Arabidopsis thaliana (Mouse-ear cress) protein is Protein OSB4, chloroplastic (OSB4).